The primary structure comprises 789 residues: Larval serum protein 1 beta chain (789 aa).

The signal sequence occupies residues 1 to 16 (MKIAIALLACLGLAAA).

The protein belongs to the hemocyanin family. As to quaternary structure, heterohexamer, composed of three subunits, alpha, beta and gamma. Larval hemolymph.

Its subcellular location is the secreted. The protein resides in the extracellular space. Its function is as follows. Larval storage protein (LSP) which may serve as a store of amino acids for synthesis of adult proteins. The sequence is that of Larval serum protein 1 beta chain (Lsp1beta) from Drosophila melanogaster (Fruit fly).